Consider the following 323-residue polypeptide: tRNA U34 carboxymethyltransferase (323 aa).

Carboxy-S-adenosyl-L-methionine contacts are provided by residues Lys91, Trp105, Lys110, Gly130, 152–154, 181–182, Met196, Tyr200, and Arg315; these read DPT and IE.

Belongs to the class I-like SAM-binding methyltransferase superfamily. CmoB family. In terms of assembly, homotetramer.

The catalysed reaction is carboxy-S-adenosyl-L-methionine + 5-hydroxyuridine(34) in tRNA = 5-carboxymethoxyuridine(34) in tRNA + S-adenosyl-L-homocysteine + H(+). Functionally, catalyzes carboxymethyl transfer from carboxy-S-adenosyl-L-methionine (Cx-SAM) to 5-hydroxyuridine (ho5U) to form 5-carboxymethoxyuridine (cmo5U) at position 34 in tRNAs. This chain is tRNA U34 carboxymethyltransferase, found in Salmonella paratyphi A (strain ATCC 9150 / SARB42).